The chain runs to 597 residues: Aspartate--tRNA ligase (597 aa).

Glutamate 171 is a binding site for L-aspartate. Positions 195–198 (QLFK) are aspartate. L-aspartate is bound at residue arginine 217. Residues 217–219 (RDE) and glutamine 226 each bind ATP. An L-aspartate-binding site is contributed by histidine 448. Glutamate 482 serves as a coordination point for ATP. Arginine 489 lines the L-aspartate pocket. ATP is bound at residue 534–537 (GLDR).

The protein belongs to the class-II aminoacyl-tRNA synthetase family. Type 1 subfamily. As to quaternary structure, homodimer.

It is found in the cytoplasm. It catalyses the reaction tRNA(Asp) + L-aspartate + ATP = L-aspartyl-tRNA(Asp) + AMP + diphosphate. Functionally, catalyzes the attachment of L-aspartate to tRNA(Asp) in a two-step reaction: L-aspartate is first activated by ATP to form Asp-AMP and then transferred to the acceptor end of tRNA(Asp). The chain is Aspartate--tRNA ligase from Photobacterium profundum (strain SS9).